A 210-amino-acid chain; its full sequence is Na(+)-translocating NADH-quinone reductase subunit D (210 aa).

Helical transmembrane passes span 11-31 (ILAP…VCSA), 42-62 (FVMT…VSLI), 70-90 (VRII…DQIL), 103-123 (VFVG…AFAM), 131-151 (FIDG…VGFF), and 178-198 (NGLM…IWAI).

It belongs to the NqrDE/RnfAE family. Composed of six subunits; NqrA, NqrB, NqrC, NqrD, NqrE and NqrF.

It localises to the cell inner membrane. The enzyme catalyses a ubiquinone + n Na(+)(in) + NADH + H(+) = a ubiquinol + n Na(+)(out) + NAD(+). NQR complex catalyzes the reduction of ubiquinone-1 to ubiquinol by two successive reactions, coupled with the transport of Na(+) ions from the cytoplasm to the periplasm. NqrA to NqrE are probably involved in the second step, the conversion of ubisemiquinone to ubiquinol. The chain is Na(+)-translocating NADH-quinone reductase subunit D from Vibrio anguillarum (Listonella anguillarum).